The primary structure comprises 540 residues: CUB domain-containing protein 2 (540 aa).

The first 22 residues, 1–22 (MLAEWGACLLLAVALLGPGLQA), serve as a signal peptide directing secretion. The Extracellular segment spans residues 23–516 (QAMEGVKCGG…VSMVAQDTSD (494 aa)). 6 cysteine pairs are disulfide-bonded: C30–C56, C83–C106, C145–C171, C198–C218, C257–C283, and C314–C336. CUB domains lie at 30 to 143 (CGGV…YQKD), 145 to 255 (CGGV…YFSG), and 257 to 373 (CQEV…YIGV). N40 carries N-linked (GlcNAc...) asparagine glycosylation. N267 is a glycosylation site (N-linked (GlcNAc...) asparagine). N-linked (GlcNAc...) asparagine glycans are attached at residues N377, N435, and N436. Residues 517-537 (IVFLGLCILAGILMVIAIVVL) form a helical membrane-spanning segment. The Cytoplasmic portion of the chain corresponds to 538 to 540 (MLL).

Its subcellular location is the membrane. The chain is CUB domain-containing protein 2 (CDCP2) from Homo sapiens (Human).